The primary structure comprises 192 residues: Small ribosomal subunit protein bS16 (192 aa).

The disordered stretch occupies residues Ala153 to Glu192. Residues Val178 to Glu192 show a composition bias toward low complexity.

It belongs to the bacterial ribosomal protein bS16 family.

The sequence is that of Small ribosomal subunit protein bS16 from Porphyromonas gingivalis (strain ATCC BAA-308 / W83).